Consider the following 292-residue polypeptide: uncharacterized protein (292 aa).

The tract at residues 62–81 (ESSSDSDMGFHESQQNQKSN) is disordered.

This is an uncharacterized protein from Homo sapiens (Human).